The chain runs to 239 residues: Ubiquinone biosynthesis O-methyltransferase (239 aa).

Residues R42, G62, D83, and M127 each contribute to the S-adenosyl-L-methionine site.

Belongs to the methyltransferase superfamily. UbiG/COQ3 family.

It catalyses the reaction a 3-demethylubiquinol + S-adenosyl-L-methionine = a ubiquinol + S-adenosyl-L-homocysteine + H(+). The catalysed reaction is a 3-(all-trans-polyprenyl)benzene-1,2-diol + S-adenosyl-L-methionine = a 2-methoxy-6-(all-trans-polyprenyl)phenol + S-adenosyl-L-homocysteine + H(+). The protein operates within cofactor biosynthesis; ubiquinone biosynthesis. Functionally, O-methyltransferase that catalyzes the 2 O-methylation steps in the ubiquinone biosynthetic pathway. The protein is Ubiquinone biosynthesis O-methyltransferase of Pectobacterium carotovorum subsp. carotovorum (strain PC1).